Reading from the N-terminus, the 272-residue chain is Shikimate dehydrogenase (NADP(+)) (272 aa).

Residues 14–16 (SKS) and threonine 61 contribute to the shikimate site. The Proton acceptor role is filled by lysine 65. Glutamate 77 lines the NADP(+) pocket. Shikimate contacts are provided by asparagine 86 and aspartate 102. NADP(+) contacts are provided by residues 126-130 (GAGGA), 149-154 (NRTVSR), and methionine 213. Tyrosine 215 contributes to the shikimate binding site. Glycine 237 contacts NADP(+).

This sequence belongs to the shikimate dehydrogenase family. Homodimer.

The catalysed reaction is shikimate + NADP(+) = 3-dehydroshikimate + NADPH + H(+). Its pathway is metabolic intermediate biosynthesis; chorismate biosynthesis; chorismate from D-erythrose 4-phosphate and phosphoenolpyruvate: step 4/7. Involved in the biosynthesis of the chorismate, which leads to the biosynthesis of aromatic amino acids. Catalyzes the reversible NADPH linked reduction of 3-dehydroshikimate (DHSA) to yield shikimate (SA). This is Shikimate dehydrogenase (NADP(+)) from Shigella boydii serotype 18 (strain CDC 3083-94 / BS512).